A 417-amino-acid polypeptide reads, in one-letter code: Queuine tRNA-ribosyltransferase accessory subunit 2 (417 aa).

Zn(2+)-binding residues include Cys-324, Cys-326, Cys-329, and His-355.

It belongs to the queuine tRNA-ribosyltransferase family. QTRT2 subfamily. As to quaternary structure, heterodimer of a catalytic subunit and an accessory subunit. Zn(2+) is required as a cofactor.

It localises to the cytoplasm. Non-catalytic subunit of the queuine tRNA-ribosyltransferase (TGT) that catalyzes the base-exchange of a guanine (G) residue with queuine (Q) at position 34 (anticodon wobble position) in tRNAs with GU(N) anticodons (tRNA-Asp, -Asn, -His and -Tyr), resulting in the hypermodified nucleoside queuosine (7-(((4,5-cis-dihydroxy-2-cyclopenten-1-yl)amino)methyl)-7-deazaguanosine). The chain is Queuine tRNA-ribosyltransferase accessory subunit 2 from Drosophila persimilis (Fruit fly).